Reading from the N-terminus, the 157-residue chain is uncharacterized protein (157 aa).

The protein belongs to the mimivirus L242/L243 family.

This is an uncharacterized protein from Acanthamoeba polyphaga (Amoeba).